The chain runs to 387 residues: Putative transmembrane protein At3g54730 (387 aa).

Over residues 10–25 (PAPPLLLPSPNPPPCA) the composition is skewed to pro residues. A disordered region spans residues 10–45 (PAPPLLLPSPNPPPCALPQDLTSLVSPSEPPDPPDP). The next 8 membrane-spanning stretches (helical) occupy residues 97–117 (VFPL…HPLV), 128–148 (GSNF…ILQF), 154–174 (VMIS…MILL), 186–206 (VLFS…VGLI), 221–241 (IQKL…FLEI), 292–312 (SWCF…YPLE), 335–355 (FSTI…FIFF), and 362–382 (PFVA…LNHF).

It is found in the membrane. The sequence is that of Putative transmembrane protein At3g54730 from Arabidopsis thaliana (Mouse-ear cress).